The primary structure comprises 385 residues: MSKRDFYDVLGVSRNASADELKKAYRSLAKKYHPDQNQGDKEAEQRFKELNEAYDALKDEQSRAAYDQFGHAAFDGGMGARGGPGGMGGFGAGASMSDIFDDLFGEFMGGRGGRGGRRGDGGQTRGHDLRYNMEISLEEAFEGKKAQVRVPGSVACEVCTGTGAAPGSSPITCPTCQGHGKVRASQGFFTIERTCPTCHGRGQTIDKPCTNCHGAGRVEKERTLSVNIPAGVEDGTRIRLSGEGEAGMRGGPAGDLYIFLSVKPHRLFERDGADLFCRVPIAMVTATLGGEIEVPTLGGKKVKVKVPEGAQTGRQFRLRGKGMPVVNSRETGDLYIQITVETPVNLTKKQKELLKEFEQASTPGNNPESAGFFAKVKEFWDGFQN.

One can recognise a J domain in the interval 5–70 (DFYDVLGVSR…QSRAAYDQFG (66 aa)). A CR-type zinc finger spans residues 143 to 221 (GKKAQVRVPG…CHGAGRVEKE (79 aa)). Zn(2+)-binding residues include Cys156, Cys159, Cys173, Cys176, Cys195, Cys198, Cys209, and Cys212. CXXCXGXG motif repeat units lie at residues 156-163 (CEVCTGTG), 173-180 (CPTCQGHG), 195-202 (CPTCHGRG), and 209-216 (CTNCHGAG).

Belongs to the DnaJ family. In terms of assembly, homodimer. Requires Zn(2+) as cofactor.

The protein localises to the cytoplasm. Its function is as follows. Participates actively in the response to hyperosmotic and heat shock by preventing the aggregation of stress-denatured proteins and by disaggregating proteins, also in an autonomous, DnaK-independent fashion. Unfolded proteins bind initially to DnaJ; upon interaction with the DnaJ-bound protein, DnaK hydrolyzes its bound ATP, resulting in the formation of a stable complex. GrpE releases ADP from DnaK; ATP binding to DnaK triggers the release of the substrate protein, thus completing the reaction cycle. Several rounds of ATP-dependent interactions between DnaJ, DnaK and GrpE are required for fully efficient folding. Also involved, together with DnaK and GrpE, in the DNA replication of plasmids through activation of initiation proteins. The sequence is that of Chaperone protein DnaJ from Parvibaculum lavamentivorans (strain DS-1 / DSM 13023 / NCIMB 13966).